A 75-amino-acid polypeptide reads, in one-letter code: Small ribosomal subunit protein bS18 (75 aa).

Belongs to the bacterial ribosomal protein bS18 family. In terms of assembly, part of the 30S ribosomal subunit. Forms a tight heterodimer with protein bS6.

Its function is as follows. Binds as a heterodimer with protein bS6 to the central domain of the 16S rRNA, where it helps stabilize the platform of the 30S subunit. In Glaesserella parasuis serovar 5 (strain SH0165) (Haemophilus parasuis), this protein is Small ribosomal subunit protein bS18.